The sequence spans 345 residues: Fructose-1,6-bisphosphatase class 1 (345 aa).

Residues Glu90, Asp109, Leu111, and Asp112 each coordinate Mg(2+). Substrate is bound by residues 112–115 and Asn199; that span reads DGSS. Glu271 contacts Mg(2+).

It belongs to the FBPase class 1 family. As to quaternary structure, homotetramer. It depends on Mg(2+) as a cofactor.

It is found in the cytoplasm. It catalyses the reaction beta-D-fructose 1,6-bisphosphate + H2O = beta-D-fructose 6-phosphate + phosphate. Its pathway is carbohydrate biosynthesis; Calvin cycle. This is Fructose-1,6-bisphosphatase class 1 from Rhodopseudomonas palustris (strain BisB5).